Reading from the N-terminus, the 30-residue chain is AESKKGFLPVIDKKDGYTFLYPFGGQEVSI.

Its subcellular location is the plastid. The protein localises to the chloroplast thylakoid lumen. This chain is Thylakoid lumenal 17 kDa protein, found in Spinacia oleracea (Spinach).